The following is a 61-amino-acid chain: Small ribosomal subunit protein uS14 (61 aa).

Positions 24, 27, 40, and 43 each coordinate Zn(2+).

Belongs to the universal ribosomal protein uS14 family. Zinc-binding uS14 subfamily. Part of the 30S ribosomal subunit. Contacts proteins S3 and S10. Zn(2+) serves as cofactor.

In terms of biological role, binds 16S rRNA, required for the assembly of 30S particles and may also be responsible for determining the conformation of the 16S rRNA at the A site. In Fervidobacterium nodosum (strain ATCC 35602 / DSM 5306 / Rt17-B1), this protein is Small ribosomal subunit protein uS14.